Reading from the N-terminus, the 365-residue chain is Chorismate synthase (365 aa).

Arg48 is an NADP(+) binding site. FMN is bound by residues 125–127, 238–239, Gly278, 293–297, and Arg319; these read RSS, NA, and KPTSS.

Belongs to the chorismate synthase family. Homotetramer. FMNH2 serves as cofactor.

The enzyme catalyses 5-O-(1-carboxyvinyl)-3-phosphoshikimate = chorismate + phosphate. Its pathway is metabolic intermediate biosynthesis; chorismate biosynthesis; chorismate from D-erythrose 4-phosphate and phosphoenolpyruvate: step 7/7. Functionally, catalyzes the anti-1,4-elimination of the C-3 phosphate and the C-6 proR hydrogen from 5-enolpyruvylshikimate-3-phosphate (EPSP) to yield chorismate, which is the branch point compound that serves as the starting substrate for the three terminal pathways of aromatic amino acid biosynthesis. This reaction introduces a second double bond into the aromatic ring system. In Ruthia magnifica subsp. Calyptogena magnifica, this protein is Chorismate synthase.